We begin with the raw amino-acid sequence, 349 residues long: Tribbles homolog 3 (349 aa).

The segment at 1 to 122 (MRATSLAASA…QHVARPTEVL (122 aa)) is interaction with DDIT3/CHOP. Residues 35-57 (VRDEPEPGPTPSLPPASDLSPAV) are disordered. A Protein kinase domain is found at 63-310 (LGPYILLERE…ALGILLHPWL (248 aa)). Positions 317–349 (VSPPRSDRREMDQVVPDGPQLEEAEEGEVGLYG) are disordered. A compositionally biased stretch (acidic residues) spans 336-349 (QLEEAEEGEVGLYG).

The protein belongs to the protein kinase superfamily. CAMK Ser/Thr protein kinase family. Tribbles subfamily. Interacts with AKT1, AKT2, MAP2K1 and MAP2K7. Interacts with ATF4. Interacts with DDIT3/CHOP and inhibits its interaction with EP300/P300. Interacts with APOBEC3C. Interacts (via N-terminus) with APOBEC3A. Interacts with RELA. Detected only in the lung. Not detected in the heart, brain, spleen, liver, skeletal muscle, kidney and testis.

The protein resides in the nucleus. Inactive protein kinase which acts as a regulator of the integrated stress response (ISR), a process for adaptation to various stress. Inhibits the transcriptional activity of DDIT3/CHOP and is involved in DDIT3/CHOP-dependent cell death during ER stress. May play a role in programmed neuronal cell death but does not appear to affect non-neuronal cells. Acts as a negative feedback regulator of the ATF4-dependent transcription during the ISR: while TRIB3 expression is promoted by ATF4, TRIB3 protein interacts with ATF4 and inhibits ATF4 transcription activity. Disrupts insulin signaling by binding directly to Akt kinases and blocking their activation. May bind directly to and mask the 'Thr-308' phosphorylation site in AKT1. Interacts with the NF-kappa-B transactivator p65 RELA and inhibits its phosphorylation and thus its transcriptional activation activity. Interacts with MAPK kinases and regulates activation of MAP kinases. Can inhibit APOBEC3A editing of nuclear DNA. This chain is Tribbles homolog 3 (Trib3), found in Rattus norvegicus (Rat).